The sequence spans 1203 residues: Metabotropic glutamate receptor 5 (1203 aa).

A signal peptide spans 1–20; that stretch reads MVLLLILSVLLLKEDVRGSA. Residues 21–579 are Extracellular-facing; sequence QSSERRVVAH…QYLRWGDPEP (559 aa). An intrachain disulfide couples Cys-57 to Cys-99. L-glutamate is bound at residue Tyr-64. An N-linked (GlcNAc...) asparagine glycan is attached at Asn-88. L-glutamate-binding positions include Ser-151 and 172-174; that span reads SAT. Asn-209 carries an N-linked (GlcNAc...) asparagine glycan. Tyr-222 is a binding site for L-glutamate. Intrachain disulfides connect Cys-240/Cys-529, Cys-275/Cys-277, Cys-364/Cys-380, Cys-418/Cys-425, Cys-510/Cys-530, Cys-514/Cys-533, Cys-536/Cys-548, and Cys-551/Cys-564. Position 304 (Asp-304) interacts with L-glutamate. N-linked (GlcNAc...) asparagine glycans are attached at residues Asn-377 and Asn-381. An L-glutamate-binding site is contributed by Lys-395. A glycan (N-linked (GlcNAc...) asparagine) is linked at Asn-444. The chain crosses the membrane as a helical span at residues 580–602; sequence IAAVVFACLGLLATLFVTVIFII. The Cytoplasmic portion of the chain corresponds to 603–612; the sequence is YRDTPVVKSS. The chain crosses the membrane as a helical span at residues 613 to 635; the sequence is SRELCYIILAGICLGYLCTFCLI. At 636 to 643 the chain is on the extracellular side; that stretch reads AKPKQIYC. A disulfide bridge links Cys-643 with Cys-732. A helical membrane pass occupies residues 644–666; that stretch reads YLQRIGIGLSPAMSYSALVTKTN. The Cytoplasmic segment spans residues 667-692; it reads RIARILAGSKKKICTKKPRFMSACAQ. The helical transmembrane segment at 693-713 threads the bilayer; the sequence is LVIAFILICIQLGIIVALFIM. Topologically, residues 714–736 are extracellular; sequence EPPDIMHDYPSIREVYLICNTTN. N-linked (GlcNAc...) asparagine glycosylation is present at Asn-733. The helical transmembrane segment at 737–758 threads the bilayer; sequence LGVVTPLGYNGLLILSCTFYAF. Residues 759 to 771 lie on the Cytoplasmic side of the membrane; it reads KTRNVPANFNEAK. A helical membrane pass occupies residues 772–794; it reads YIAFTMYTTCIIWLAFVPIYFGS. At 795-797 the chain is on the extracellular side; sequence NYK. The chain crosses the membrane as a helical span at residues 798–819; that stretch reads IITMCFSVSLSATVALGCMFVP. Residues 820–1203 are Cytoplasmic-facing; that stretch reads KVYIILAKPE…RDYTQSSSSL (384 aa). At Ser-860 the chain carries Phosphoserine. Arg-868 carries the omega-N-methylarginine modification. 3 disordered regions span residues 892–970, 1003–1054, and 1122–1182; these read FTPK…GSGP, EESF…GSLM, and GAQG…ALCI. A compositionally biased stretch (polar residues) spans 905-920; the sequence is TMSSSNGKSVTWAQNE. Residue Arg-924 is modified to Omega-N-methylarginine. Low complexity predominate over residues 1007-1017; it reads PAAARPRSPSP. A phosphoserine mark is found at Ser-1014 and Ser-1016. Polar residues-rich tracts occupy residues 1039–1054 and 1165–1176; these read HSET…GSLM and DSGSTTPNSPVS.

It belongs to the G-protein coupled receptor 3 family. As to quaternary structure, interacts with RYR1, RYR2, ITPR1, SHANK1 and SHANK3. The PPXXF motif binds HOMER1, HOMER2 and HOMER3. Interacts with SIAH1 and TAMALIN. Interacts with NCDN. Interacts with NECAB2. Interacts with CAMK2A. Widely distributed in neuronal cells of the central nervous system.

It localises to the cell membrane. Functionally, G-protein coupled receptor for glutamate. Ligand binding causes a conformation change that triggers signaling via guanine nucleotide-binding proteins (G proteins) and modulates the activity of down-stream effectors. Signaling activates a phosphatidylinositol-calcium second messenger system and generates a calcium-activated chloride current. Plays an important role in the regulation of synaptic plasticity and the modulation of the neural network activity. The polypeptide is Metabotropic glutamate receptor 5 (Grm5) (Rattus norvegicus (Rat)).